A 162-amino-acid chain; its full sequence is uncharacterized protein (162 aa).

An N-terminal signal peptide occupies residues 1-21 (MEGIMKKFFALMTLIAGISFS). Residues 32-118 (VIRESKFIAK…KKAELEKMVF (87 aa)) are a coiled coil.

It belongs to the Skp family.

This is an uncharacterized protein from Aquifex aeolicus (strain VF5).